A 184-amino-acid polypeptide reads, in one-letter code: Translocon-associated protein subunit beta (184 aa).

The signal sequence occupies residues 1–20; sequence MNFKTVISLFLVLFVSFVYC. The Lumenal portion of the chain corresponds to 21–147; it reads ENGAELLFHK…SQADYEKRTS (127 aa). An N-linked (GlcNAc...) asparagine glycan is attached at N94. The chain crosses the membrane as a helical span at residues 148-168; that stretch reads LLIKEWITFFVLCAGAIALPY. Residues 169 to 184 lie on the Cytoplasmic side of the membrane; that stretch reads SISTYYKKNYENGIKK.

Belongs to the TRAP-beta family. In terms of assembly, heterotrimer of TRAP-alpha, TRAP-beta and TRAP-gamma.

Its subcellular location is the endoplasmic reticulum membrane. Functionally, TRAP proteins are part of a complex whose function is to bind calcium to the ER membrane and thereby regulate the retention of ER resident proteins. In Dictyostelium discoideum (Social amoeba), this protein is Translocon-associated protein subunit beta (ssr2).